Reading from the N-terminus, the 1189-residue chain is MVPCWNHGNITRSKAEELLSRTGKDGSFLVRASESISRAYALCVLYRNCVYTYRILPNEDDKFTVQASEGVSMRFFTKLDQLIEFYKKENMGLVTHLQYPVPLEEEDTGDDPEEDTVESVVSPPELPPRNIPLTASSCEAKEVPFSNENPRATETSRPSLSETLFQRLQSMDTSGLPEEHLKAIQDYLSTQLAQDSEFVKTGSSSLPHLKKLTTLLCKELYGEVIRTLPSLESLQRLFDQQLSPGLRPRPQVPGEANPINMVSKLSQLTSLLSSIEDKVKALLHEGPESPHRPSLIPPVTFEVKAESLGIPQKMQLKVDVESGKLIIKKSKDGSEDKFYSHKKILQLIKSQKFLNKLVILVETEKEKILRKEYVFADSKKREGFCQLLQQMKNKHSEQPEPDMITIFIGTWNMGNAPPPKKITSWFLSKGQGKTRDDSADYIPHDIYVIGTQEDPLSEKEWLEILKHSLQEITSVTFKTVAIHTLWNIRIVVLAKPEHENRISHICTDNVKTGIANTLGNKGAVGVSFMFNGTSLGFVNSHLTSGSEKKLRRNQNYMNILRFLALGDKKLSPFNITHRFTHLFWFGDLNYRVDLPTWEAETIIQKIKQQQYADLLSHDQLLTERREQKVFLHFEEEEITFAPTYRFERLTRDKYAYTKQKATGMKYNLPSWCDRVLWKSYPLVHVVCQSYGSTSDIMTSDHSPVFATFEAGVTSQFVSKNGPGTVDSQGQIEFLRCYATLKTKSQTKFYLEFHSSCLESFVKSQEGENEEGSEGELVVKFGETLPKLKPIISDPEYLLDQHILISIKSSDSDESYGEGCIALRLEATETQLPIYTPLTHHGELTGHFQGEIKLQTSQGKTREKLYDFVKTERDESSGPKTLKSLTSHDPMKQWEVTSRAPPCSGSSITEIINPNYMGVGPFGPPMPLHVKQTLSPDQQPTAWSYDQPPKDSPLGPCRGESPPTPPGQPPISPKKFLPSTANRGLPPRTQESRPSDLGKNAGDTLPQEDLPLTKPEMFENPLYGSLSSFPKPAPRKDQESPKMPRKEPPPCPEPGILSPSIVLTKAQEADRGEGPGKQVPAPRLRSFTCSSSAEGRAAGGDKSQGKPKTPVSSQAPVPAKRPIKPSRSEINQQTPPTPTPRPPLPVKSPAVLHLQHSKGRDYRDNTELPHHGKHRPEEGPPGPLGRTAMQ.

The 97-residue stretch at Trp-5–Val-101 folds into the SH2 domain. Residues Leu-103–Val-117 are compositionally biased toward acidic residues. The disordered stretch occupies residues Leu-103 to Pro-132. An SH3-binding 1 motif is present at residues Pro-124 to Arg-129. Position 243 is a phosphoserine (Ser-243). A disordered region spans residues Thr-870–Ser-906. The NPXY motif 1 signature appears at Asn-912–Tyr-915. A Phosphotyrosine modification is found at Tyr-915. The tract at residues Gly-922–Gln-1189 is disordered. Residues Gln-931–Ser-943 show a composition bias toward polar residues. The residue at position 934 (Ser-934) is a Phosphoserine. Position 944 is a phosphotyrosine (Tyr-944). The residue at position 960 (Ser-960) is a Phosphoserine. Residues Pro-961–Ser-971 show a composition bias toward pro residues. Residue Thr-963 is modified to Phosphothreonine. An SH3-binding 2 motif is present at residues Pro-969–Lys-974. Phosphoserine is present on Ser-971. The tract at residues Met-1016–Lys-1030 is interaction with DAB2. Residues Asn-1019–Tyr-1022 carry the NPXY motif 2 motif. A Phosphotyrosine modification is found at Tyr-1022. Residues Pro-1033 to Pro-1047 show a composition bias toward basic and acidic residues. Residues Pro-1040–Pro-1051 carry the SH3-binding 3 motif. Residues Pro-1134 to Val-1145 are compositionally biased toward pro residues. The segment covering Lys-1157–Glu-1177 has biased composition (basic and acidic residues).

It belongs to the inositol 1,4,5-trisphosphate 5-phosphatase family. As to quaternary structure, interacts with tyrosine phosphorylated form of SHC1. Interacts with tyrosine phosphorylated form of DOK1. Interacts with tyrosine phosphorylated form of DOK3. Interacts with tyrosine phosphorylated form of SLAMF1/CD150. Interacts with PTPN11 in response to IL-3. Interacts with receptor EPOR. Interacts with receptors MS4A2/FCER1B and FCER1G. Interacts with receptors FCGR2B and FCGR3. Interacts with receptor FCGR2A, leading to regulate gene expression during the phagocytic process. Interacts with GRB2. Interacts with PLCG1. Interacts with tyrosine kinases SRC and TEC. Interacts with c-Met/MET. Interacts with MILR1 (tyrosine-phosphorylated). Can weakly interact (via NPXY motif 2) with DAB2 (via PID domain); the interaction is impaired by tyrosine phosphorylation of the NPXY motif. Interacts with FCRL3 and FCRL6 (tyrosine phosphorylated form). Interacts (via SH2 domain) with tyrosine phosphorylated KLRC1 (via ITIM). Interacts with MPL/TPOR. Post-translationally, tyrosine phosphorylated by the members of the SRC family after exposure to a diverse array of extracellular stimuli such as cytokines, growth factors, antibodies, chemokines, integrin ligands and hypertonic and oxidative stress. Phosphorylated upon IgG receptor FCGR2B-binding. Specifically expressed in immune and hematopoietic cells. Expressed in bone marrow and blood cells. Levels vary considerably within this compartment. Present in at least 74% of immature CD34+ cells, whereas within the more mature population of CD33+ cells, it is present in only 10% of cells. Present in the majority of T-cells, while it is present in a minority of B-cells (at protein level).

It localises to the cytoplasm. The protein resides in the cell membrane. Its subcellular location is the membrane raft. The protein localises to the cytoskeleton. It is found in the membrane. It catalyses the reaction a 1,2-diacyl-sn-glycero-3-phospho-(1D-myo-inositol-3,4,5-trisphosphate) + H2O = a 1,2-diacyl-sn-glycero-3-phospho-(1D-myo-inositol-3,4-bisphosphate) + phosphate. It carries out the reaction 1D-myo-inositol 1,3,4,5-tetrakisphosphate + H2O = 1D-myo-inositol 1,3,4-trisphosphate + phosphate. The enzyme catalyses a 1,2-diacyl-sn-glycero-3-phospho-(1D-myo-inositol-4,5-bisphosphate) + H2O = a 1,2-diacyl-sn-glycero-3-phospho-(1D-myo-inositol 4-phosphate) + phosphate. With respect to regulation, activated upon translocation to the sites of synthesis of PtdIns(3,4,5)P3 in the membrane. In terms of biological role, phosphatidylinositol (PtdIns) phosphatase that specifically hydrolyzes the 5-phosphate of phosphatidylinositol-3,4,5-trisphosphate (PtdIns(3,4,5)P3) to produce PtdIns(3,4)P2, thereby negatively regulating the PI3K (phosphoinositide 3-kinase) pathways. Able also to hydrolyzes the 5-phosphate of phosphatidylinositol-4,5-bisphosphate (PtdIns(4,5)P3) and inositol 1,3,4,5-tetrakisphosphate. Acts as a negative regulator of B-cell antigen receptor signaling. Mediates signaling from the FC-gamma-RIIB receptor (FCGR2B), playing a central role in terminating signal transduction from activating immune/hematopoietic cell receptor systems. Acts as a negative regulator of myeloid cell proliferation/survival and chemotaxis, mast cell degranulation, immune cells homeostasis, integrin alpha-IIb/beta-3 signaling in platelets and JNK signaling in B-cells. Regulates proliferation of osteoclast precursors, macrophage programming, phagocytosis and activation and is required for endotoxin tolerance. Involved in the control of cell-cell junctions, CD32a signaling in neutrophils and modulation of EGF-induced phospholipase C activity. Key regulator of neutrophil migration, by governing the formation of the leading edge and polarization required for chemotaxis. Modulates FCGR3/CD16-mediated cytotoxicity in NK cells. Mediates the activin/TGF-beta-induced apoptosis through its Smad-dependent expression. The chain is Phosphatidylinositol 3,4,5-trisphosphate 5-phosphatase 1 (INPP5D) from Homo sapiens (Human).